Consider the following 251-residue polypeptide: 2-C-methyl-D-erythritol 4-phosphate cytidylyltransferase (251 aa).

The protein belongs to the IspD/TarI cytidylyltransferase family. IspD subfamily.

It catalyses the reaction 2-C-methyl-D-erythritol 4-phosphate + CTP + H(+) = 4-CDP-2-C-methyl-D-erythritol + diphosphate. Its pathway is isoprenoid biosynthesis; isopentenyl diphosphate biosynthesis via DXP pathway; isopentenyl diphosphate from 1-deoxy-D-xylulose 5-phosphate: step 2/6. Its function is as follows. Catalyzes the formation of 4-diphosphocytidyl-2-C-methyl-D-erythritol from CTP and 2-C-methyl-D-erythritol 4-phosphate (MEP). The protein is 2-C-methyl-D-erythritol 4-phosphate cytidylyltransferase of Cupriavidus pinatubonensis (strain JMP 134 / LMG 1197) (Cupriavidus necator (strain JMP 134)).